Consider the following 303-residue polypeptide: Nucleotide-binding protein USA300HOU_0794 (303 aa).

18–25 (GLSGAGKS) contacts ATP. 69–72 (DLRG) contacts GTP.

This sequence belongs to the RapZ-like family.

In terms of biological role, displays ATPase and GTPase activities. The chain is Nucleotide-binding protein USA300HOU_0794 from Staphylococcus aureus (strain USA300 / TCH1516).